The following is a 622-amino-acid chain: Chaperone protein HscA homolog (622 aa).

This sequence belongs to the heat shock protein 70 family.

Functionally, chaperone involved in the maturation of iron-sulfur cluster-containing proteins. Has a low intrinsic ATPase activity which is markedly stimulated by HscB. In Burkholderia pseudomallei (strain 668), this protein is Chaperone protein HscA homolog.